We begin with the raw amino-acid sequence, 208 residues long: NAD(P)H-hydrate epimerase (208 aa).

One can recognise a YjeF N-terminal domain in the interval 10–208 (IRDAERQTLA…TLGVIMTPAN (199 aa)). 54–58 (NNGGD) is a (6S)-NADPHX binding site. Residues Asn55 and Asp117 each coordinate K(+). Residues 121 to 127 (GIGLNRP) and Asp150 contribute to the (6S)-NADPHX site. Ser153 is a K(+) binding site.

The protein belongs to the NnrE/AIBP family. The cofactor is K(+).

The enzyme catalyses (6R)-NADHX = (6S)-NADHX. It carries out the reaction (6R)-NADPHX = (6S)-NADPHX. Catalyzes the epimerization of the S- and R-forms of NAD(P)HX, a damaged form of NAD(P)H that is a result of enzymatic or heat-dependent hydration. This is a prerequisite for the S-specific NAD(P)H-hydrate dehydratase to allow the repair of both epimers of NAD(P)HX. The chain is NAD(P)H-hydrate epimerase from Achromobacter xylosoxidans (strain A8).